A 306-amino-acid polypeptide reads, in one-letter code: LysM and putative peptidoglycan-binding domain-containing protein 3 (306 aa).

The Extracellular portion of the chain corresponds to 1 to 217; it reads MAGRHQNRSF…PYYGADWGIG (217 aa). Asparagine 7 carries an N-linked (GlcNAc...) asparagine glycan. Serine 55 carries the post-translational modification Phosphoserine. Residues 65 to 109 enclose the LysM domain; the sequence is LTKDIQEGDTLNAIALQYCCTVADIKRVNNLISDQDFFALRSIKI. Residues 218–238 form a helical membrane-spanning segment; it reads WWTAVVIMLIVGIITPVFYLL. Topologically, residues 239–306 are cytoplasmic; sequence YYEILAKVDV…SQSPAAQQET (68 aa).

It is found in the cell membrane. The protein localises to the golgi apparatus. Its function is as follows. Essential for Golgi structural integrity. This is LysM and putative peptidoglycan-binding domain-containing protein 3 (LYSMD3) from Homo sapiens (Human).